Consider the following 470-residue polypeptide: 5-hydroxytryptamine receptor 2A (470 aa).

The Extracellular portion of the chain corresponds to 1–80; that stretch reads MDVLCEENTS…LQEKNWSALL (80 aa). Residues Asn-8, Asn-38, Asn-44, Asn-51, Asn-54, and Asn-75 are each glycosylated (N-linked (GlcNAc...) asparagine). The helical transmembrane segment at 81–97 threads the bilayer; the sequence is TAVVIILTIAGNILVIM. Topologically, residues 98–111 are cytoplasmic; it reads AVSLEKKLQNATNY. A helical membrane pass occupies residues 112-137; sequence FLMSLAIADMLLGFLVMPVSMLTILY. The Extracellular segment spans residues 138–146; that stretch reads GYRWPLPSK. A helical transmembrane segment spans residues 147 to 171; that stretch reads LCAVWIYLDVLFSTASIMHLCAISL. The cysteines at positions 148 and 227 are disulfide-linked. Residue Asp-155 participates in serotonin binding. The DRY motif; important for ligand-induced conformation changes motif lies at 172-174; the sequence is DRY. The Cytoplasmic segment spans residues 172 to 191; the sequence is DRYVAIQNPIHHRRFNSRTK. A helical transmembrane segment spans residues 192–215; sequence AFLKIIAVWTISVGISMPIPVFGL. Over 216–232 the chain is Extracellular; sequence QDDSKVFKEGSCLLADD. A helical transmembrane segment spans residues 233–258; it reads NFVLIGSFVSFFIPLTIMVITYFLTI. Over 259-321 the chain is Cytoplasmic; it reads KSLQKEATLC…QSISNEQKAC (63 aa). Phosphoserine is present on Ser-280. The helical transmembrane segment at 322 to 347 threads the bilayer; that stretch reads KVLGIVFFLFVVMWCPFFITNIMAVI. Residue Asn-342 participates in serotonin binding. Cysteines 348 and 352 form a disulfide. The Extracellular segment spans residues 348–355; sequence CKESCNED. The chain crosses the membrane as a helical span at residues 356–381; sequence VIGALLNVFVWIGYLSSAVNPLVYTL. Positions 375 to 379 match the NPxxY motif; important for ligand-induced conformation changes and signaling motif; sequence NPLVY. Residues 382 to 470 are Cytoplasmic-facing; sequence FNKTYRSAFS…NTVNEKVSCV (89 aa). Positions 448–470 are disordered; it reads GKQHSEDAPADNSNTVNEKVSCV. A compositionally biased stretch (polar residues) spans 458–470; sequence DNSNTVNEKVSCV. The short motif at 468-470 is the PDZ-binding element; it reads SCV.

The protein belongs to the G-protein coupled receptor 1 family. In terms of assembly, interacts (via C-terminus) with MPDZ and PATJ. May interact (via C-terminus) with MPP3, PRDX6, DLG4, DLG1, CASK, APBA1 and MAGI2. Interacts with GRM2 and DRD2; this may affect signaling.

It localises to the cell membrane. The protein resides in the cell projection. The protein localises to the dendrite. Its subcellular location is the axon. It is found in the cytoplasmic vesicle. It localises to the membrane. The protein resides in the caveola. The protein localises to the presynapse. G-protein coupled receptor activity is regulated by lipids: oleamide increases HTR2A-mediated activity. Its function is as follows. G-protein coupled receptor for 5-hydroxytryptamine (serotonin). Also functions as a receptor for various drugs and psychoactive substances, including mescaline, psilocybin, 1-(2,5-dimethoxy-4-iodophenyl)-2-aminopropane (DOI) and lysergic acid diethylamide (LSD). Ligand binding causes a conformation change that triggers signaling via guanine nucleotide-binding proteins (G proteins) and modulates the activity of downstream effectors. HTR2A is coupled to G(q)/G(11) G alpha proteins and activates phospholipase C-beta, releasing diacylglycerol (DAG) and inositol 1,4,5-trisphosphate (IP3) second messengers that modulate the activity of phosphatidylinositol 3-kinase and promote the release of Ca(2+) ions from intracellular stores, respectively. Beta-arrestin family members inhibit signaling via G proteins and mediate activation of alternative signaling pathways. Affects neural activity, perception, cognition and mood. Plays a role in the regulation of behavior, including responses to anxiogenic situations and psychoactive substances. Plays a role in intestinal smooth muscle contraction, and may play a role in arterial vasoconstriction. The sequence is that of 5-hydroxytryptamine receptor 2A (HTR2A) from Sus scrofa (Pig).